Here is a 350-residue protein sequence, read N- to C-terminus: tRNA U34 carboxymethyltransferase (350 aa).

Carboxy-S-adenosyl-L-methionine is bound by residues lysine 101, tryptophan 125, lysine 130, glycine 150, 172 to 174 (DPS), 208 to 209 (LE), methionine 224, tyrosine 228, and arginine 343.

Belongs to the class I-like SAM-binding methyltransferase superfamily. CmoB family. Homotetramer.

It catalyses the reaction carboxy-S-adenosyl-L-methionine + 5-hydroxyuridine(34) in tRNA = 5-carboxymethoxyuridine(34) in tRNA + S-adenosyl-L-homocysteine + H(+). Its function is as follows. Catalyzes carboxymethyl transfer from carboxy-S-adenosyl-L-methionine (Cx-SAM) to 5-hydroxyuridine (ho5U) to form 5-carboxymethoxyuridine (cmo5U) at position 34 in tRNAs. This is tRNA U34 carboxymethyltransferase from Psychrobacter arcticus (strain DSM 17307 / VKM B-2377 / 273-4).